We begin with the raw amino-acid sequence, 501 residues long: Lysine--tRNA ligase (501 aa).

Mg(2+) contacts are provided by glutamate 411 and glutamate 418.

Belongs to the class-II aminoacyl-tRNA synthetase family. In terms of assembly, homodimer. Mg(2+) is required as a cofactor.

It localises to the cytoplasm. It catalyses the reaction tRNA(Lys) + L-lysine + ATP = L-lysyl-tRNA(Lys) + AMP + diphosphate. The chain is Lysine--tRNA ligase from Thiobacillus denitrificans (strain ATCC 25259 / T1).